The following is a 5100-amino-acid chain: Hemicentin-2 (5100 aa).

Residues 1 to 19 (MTPGAQLLPLLVAISTAVA) form the signal peptide. Residues 37 to 211 (DATLAFVFDV…QVSEVLKWVE (175 aa)) form the VWFA domain. Residues Asn-330, Asn-347, Asn-380, Asn-479, Asn-526, Asn-548, and Asn-675 are each glycosylated (N-linked (GlcNAc...) asparagine). 43 Ig-like C2-type domains span residues 426–515 (PGVP…IVIT), 517–601 (PPPQ…RATT), 609–692 (PQVS…ETVT), 699–782 (PSVS…IQLV), 787–877 (PRLT…LVVT), 882–968 (PQIA…VELV), 973–1058 (PRIH…MWLS), 1063–1156 (PMIK…YVLR), 1161–1239 (PQVQ…WKLE), 1246–1335 (PHWG…AKLV), 1340–1437 (PSIR…FNLA), 1442–1531 (PSLL…FQLS), 1536–1624 (PTIW…TSLE), 1629–1717 (PTIE…YSVE), 1722–1810 (PQLL…VEVS), 1825–1913 (SAHH…KDVT), 1920–2008 (PNIE…LRVN), 2011–2100 (PRIT…VILQ), 2105–2189 (PSIL…KHFN), 2196–2285 (PAFP…QSLE), 2290–2379 (PQVT…FALS), 2384–2473 (PHLT…FSVE), 2478–2566 (PSIE…TQLS), 2571–2662 (PTIL…YHVE), 2667–2758 (PSIS…QDFN), 2781–2871 (PHEE…YELL), 2875–2964 (PPVI…KLFT), 2971–3058 (PQIS…VQLN), 3063–3153 (PSFK…FVLA), 3157–3245 (PPTF…FVVS), 3250–3340 (PQIQ…HTVN), 3345–3432 (PTIK…RNFT), 3438–3523 (PPIL…FQLT), 3528–3609 (PHIE…FRVR), 3614–3702 (PNVV…FRVE), 3707–3793 (PTIQ…LDLR), 3798–3886 (PAIA…YQVT), 3891–3977 (PTIA…MVLT), 3982–4067 (PVVK…TRLV), 4071–4158 (PPVI…VHLT), 4163–4244 (PVLT…QAVS), 4252–4336 (PVLQ…KVVT), and 4343–4428 (PVFQ…ALLA). Residues Cys-449 and Cys-497 are joined by a disulfide bond. Intrachain disulfides connect Cys-539/Cys-588, Cys-630/Cys-678, Cys-720/Cys-766, Cys-808/Cys-859, Cys-903/Cys-952, and Cys-994/Cys-1042. Omega-N-methylarginine is present on residues Arg-909, Arg-914, and Arg-915. N-linked (GlcNAc...) asparagine glycans are attached at residues Asn-1024 and Asn-1068. Intrachain disulfides connect Cys-1091–Cys-1140 and Cys-1182–Cys-1225. A glycan (N-linked (GlcNAc...) asparagine) is linked at Asn-1264. Positions 1265-1293 (ASLPCPAQGTPKPRITWRRGPSSEPLNGR) are disordered. The cysteines at positions 1269 and 1319 are disulfide-linked. An N-linked (GlcNAc...) asparagine glycan is attached at Asn-1350. 2 disulfides stabilise this stretch: Cys-1363–Cys-1421 and Cys-1465–Cys-1515. The N-linked (GlcNAc...) asparagine glycan is linked to Asn-1542. 4 disulfide bridges follow: Cys-1559-Cys-1608, Cys-1653-Cys-1701, Cys-1745-Cys-1794, and Cys-1846-Cys-1899. 2 N-linked (GlcNAc...) asparagine glycosylation sites follow: Asn-1676 and Asn-1787. An N-linked (GlcNAc...) asparagine glycan is attached at Asn-1934. Disulfide bonds link Cys-1941/Cys-1990 and Cys-2033/Cys-2084. Asn-2034, Asn-2113, and Asn-2119 each carry an N-linked (GlcNAc...) asparagine glycan. 2 disulfides stabilise this stretch: Cys-2126-Cys-2175 and Cys-2218-Cys-2269. 4 N-linked (GlcNAc...) asparagine glycosylation sites follow: Asn-2309, Asn-2315, Asn-2345, and Asn-2395. Residues Cys-2314 and Cys-2363 are joined by a disulfide bond. Cysteines 2408 and 2457 form a disulfide. Asn-2469, Asn-2502, Asn-2541, Asn-2606, and Asn-2688 each carry an N-linked (GlcNAc...) asparagine glycan. Cystine bridges form between Cys-2501/Cys-2550 and Cys-2597/Cys-2646. Cystine bridges form between Cys-2695/Cys-2744 and Cys-2806/Cys-2855. Asn-2892 carries an N-linked (GlcNAc...) asparagine glycan. A disulfide bridge links Cys-2901 with Cys-2950. The N-linked (GlcNAc...) asparagine glycan is linked to Asn-2986. 5 disulfides stabilise this stretch: Cys-2993-Cys-3042, Cys-3088-Cys-3137, Cys-3180-Cys-3229, Cys-3273-Cys-3324, and Cys-3369-Cys-3418. Asn-3430 carries an N-linked (GlcNAc...) asparagine glycan. Intrachain disulfides connect Cys-3462-Cys-3507, Cys-3551-Cys-3593, and Cys-3637-Cys-3686. Residues Asn-3560 and Asn-3575 are each glycosylated (N-linked (GlcNAc...) asparagine). N-linked (GlcNAc...) asparagine glycosylation is found at Asn-3717 and Asn-3721. Cys-3728 and Cys-3777 are joined by a disulfide. Asn-3806 carries an N-linked (GlcNAc...) asparagine glycan. 7 disulfides stabilise this stretch: Cys-3819/Cys-3870, Cys-3912/Cys-3961, Cys-4003/Cys-4051, Cys-4093/Cys-4142, Cys-4184/Cys-4231, Cys-4274/Cys-4322, and Cys-4364/Cys-4412. Asn-4304 is a glycosylation site (N-linked (GlcNAc...) asparagine). The Nidogen G2 beta-barrel domain maps to 4432–4654 (EPRGSRGSMT…QTEENEVGCP (223 aa)). Residues Asn-4455 and Asn-4601 are each glycosylated (N-linked (GlcNAc...) asparagine). One can recognise an EGF-like 1; calcium-binding domain in the interval 4668-4708 (DKDECSGGPSPCSHTCRNAPGHFSCSCPTGFSLAWDHRNCR). Disulfide bonds link Cys-4672-Cys-4683, Cys-4679-Cys-4692, Cys-4694-Cys-4707, Cys-4713-Cys-4726, Cys-4720-Cys-4735, Cys-4739-Cys-4752, Cys-4758-Cys-4771, Cys-4765-Cys-4780, Cys-4801-Cys-4812, Cys-4808-Cys-4821, and Cys-4823-Cys-4836. An EGF-like 2; calcium-binding domain is found at 4709-4753 (DVDECAGNTHLCQEEQRCVNLLGSYNCLASCRPGFRVTADGSNCE). Residues 4754-4789 (DVDECLEQLDECHYNQLCENTPGGHHCGCPRGYRQQ) enclose the EGF-like 3; calcium-binding domain. An EGF-like 4; calcium-binding domain is found at 4797–4837 (DINECLQLPTPCVYQCQNLQGSYRCLCPPGQTLLRDGRTCI). The N-linked (GlcNAc...) asparagine glycan is linked to Asn-4845. An EGF-like 5; calcium-binding domain is found at 4904 to 4943 (DLDECRVRSLCQHACQNTEGSYYCLCPSGYRLLPSGKNCQ). 3 disulfides stabilise this stretch: Cys-4908/Cys-4918, Cys-4914/Cys-4927, and Cys-4929/Cys-4942. Asn-5035 is a glycosylation site (N-linked (GlcNAc...) asparagine).

Post-translationally, reported to be phosphorylated; however as this position is extracellular, the in vivo relevance is unsure. As to expression, in neonatal skin, localized in the pericellular space of basal epidermal keratinocytes (at protein level). In adult skin, restricted to basal keratinocytes of hair follicles and the interfollicular epidermis. Absent from the myotendinous junction but present in skeletal muscle (at protein level). Expressed in the pericellular extracellular matrix of epithelial cells in a number of tissues including embryonic trophectoderm and adult skin and tongue. Also present in the extracellular matrix of some, but not all, blood vessels. Expressed primarily in epithelial cells in the embryonic epidermis, lung, intestine, skeletal hindlimb muscle, tongue and the muscular layers of the esophagus.

The protein resides in the secreted. It is found in the extracellular space. Its subcellular location is the extracellular matrix. It localises to the cleavage furrow. The protein is Hemicentin-2 (Hmcn2) of Mus musculus (Mouse).